We begin with the raw amino-acid sequence, 578 residues long: Isocitrate dehydrogenase kinase/phosphatase (578 aa).

Residues 315–321 (APGIRGM) and K336 contribute to the ATP site. Residue D371 is part of the active site.

It belongs to the AceK family.

Its subcellular location is the cytoplasm. The enzyme catalyses L-seryl-[isocitrate dehydrogenase] + ATP = O-phospho-L-seryl-[isocitrate dehydrogenase] + ADP + H(+). Functionally, bifunctional enzyme which can phosphorylate or dephosphorylate isocitrate dehydrogenase (IDH) on a specific serine residue. This is a regulatory mechanism which enables bacteria to bypass the Krebs cycle via the glyoxylate shunt in response to the source of carbon. When bacteria are grown on glucose, IDH is fully active and unphosphorylated, but when grown on acetate or ethanol, the activity of IDH declines drastically concomitant with its phosphorylation. This Shigella boydii serotype 18 (strain CDC 3083-94 / BS512) protein is Isocitrate dehydrogenase kinase/phosphatase.